The sequence spans 112 residues: Large ribosomal subunit protein uL18 (112 aa).

The protein belongs to the universal ribosomal protein uL18 family. Part of the 50S ribosomal subunit; part of the 5S rRNA/L5/L18/L25 subcomplex. Contacts the 5S and 23S rRNAs.

Its function is as follows. This is one of the proteins that bind and probably mediate the attachment of the 5S RNA into the large ribosomal subunit, where it forms part of the central protuberance. This is Large ribosomal subunit protein uL18 from Deinococcus deserti (strain DSM 17065 / CIP 109153 / LMG 22923 / VCD115).